The primary structure comprises 56 residues: Large ribosomal subunit protein bL32 (56 aa).

Belongs to the bacterial ribosomal protein bL32 family.

The polypeptide is Large ribosomal subunit protein bL32 (Prochlorococcus marinus (strain MIT 9301)).